Reading from the N-terminus, the 376-residue chain is METDGKTLRRGWTTGTCAAAATKAACAALLTGEFPYPVDVELPSGARPAFSLATEEKGENFARAGVVKDAGDDPDVTHGALIESTVRRGEPGSGITFRAGKGVGIITRPGLPLPPGEPAINPVPRRMIETAIREVAGENADFEVEISVRDGEKLAEKTLNGRLGILGGISILGTTGVVIPFSCSAWIHSIWRGIDVARATGCTHVLGATGNTSEKAGQAVYDLPETALIDMGDFIGGMLKYLRSHPVERVTIAGGVAKMTKLAQGMLDVHSKKGLADLEALAVLAAEAGGDDNLAVAIRQANMVAHAFQLAESVGIDLGAVVAEKAWVTAAAALKTPAIALDILVFDRQGALKGRTTSTPSHQPAPSSFGDRNRRT.

Residues 353 to 376 are disordered; that stretch reads KGRTTSTPSHQPAPSSFGDRNRRT. The segment covering 355–366 has biased composition (polar residues); the sequence is RTTSTPSHQPAP.

It belongs to the CbiD family.

It carries out the reaction Co-precorrin-5B + S-adenosyl-L-methionine = Co-precorrin-6A + S-adenosyl-L-homocysteine. It functions in the pathway cofactor biosynthesis; adenosylcobalamin biosynthesis; cob(II)yrinate a,c-diamide from sirohydrochlorin (anaerobic route): step 6/10. In terms of biological role, catalyzes the methylation of C-1 in cobalt-precorrin-5B to form cobalt-precorrin-6A. This Agrobacterium fabrum (strain C58 / ATCC 33970) (Agrobacterium tumefaciens (strain C58)) protein is Cobalt-precorrin-5B C(1)-methyltransferase.